A 356-amino-acid polypeptide reads, in one-letter code: Glycerophosphodiester phosphodiesterase (356 aa).

A signal peptide spans 1 to 20 (MRGTYCVTLWGGVFAALVAG). Cys21 carries the N-palmitoyl cysteine lipid modification. Cys21 carries S-diacylglycerol cysteine lipidation. Residues 25–314 (RMIVAYRGAA…CHVHTVRKET (290 aa)) enclose the GP-PDE domain.

The protein belongs to the glycerophosphoryl diester phosphodiesterase family. In terms of processing, palmitoylated upon expression of a fusion protein with first 40 residues fused to PhoA in E.coli.

Its subcellular location is the cell inner membrane. The enzyme catalyses a sn-glycero-3-phosphodiester + H2O = an alcohol + sn-glycerol 3-phosphate + H(+). Functionally, glycerophosphoryl diester phosphodiesterase hydrolyzes deacylated phospholipids to G3P and the corresponding alcohols. In terms of biological role, binds human IgA, IgD and the Fc portion of IgG but not IgM, which may contribute to evasion of the human immune system. This Treponema pallidum (strain Nichols) protein is Glycerophosphodiester phosphodiesterase (glpQ).